The sequence spans 409 residues: ATPase ASNA1 homolog (409 aa).

Position 21-28 (Lys21–Thr28) interacts with ATP. Residue Asp62 is part of the active site. Residues Glu303 and Asn330 each contribute to the ATP site. Positions 342 and 345 each coordinate Zn(2+).

This sequence belongs to the arsA ATPase family. In terms of assembly, homodimer.

It localises to the cytoplasm. It is found in the endoplasmic reticulum. ATPase required for the post-translational delivery of tail-anchored (TA) proteins to the endoplasmic reticulum. Recognizes and selectively binds the transmembrane domain of TA proteins in the cytosol. This complex then targets to the endoplasmic reticulum by membrane-bound receptors, where the tail-anchored protein is released for insertion. This process is regulated by ATP binding and hydrolysis. ATP binding drives the homodimer towards the closed dimer state, facilitating recognition of newly synthesized TA membrane proteins. ATP hydrolysis is required for insertion. Subsequently, the homodimer reverts towards the open dimer state, lowering its affinity for the membrane-bound receptor, and returning it to the cytosol to initiate a new round of targeting. This is ATPase ASNA1 homolog from Leishmania major.